The chain runs to 157 residues: 6,7-dimethyl-8-ribityllumazine synthase (157 aa).

5-amino-6-(D-ribitylamino)uracil is bound by residues Phe-22, Ala-57–Glu-59, and Thr-81–Ile-83. Gly-86–Thr-87 provides a ligand contact to (2S)-2-hydroxy-3-oxobutyl phosphate. His-89 serves as the catalytic Proton donor. Phe-114 provides a ligand contact to 5-amino-6-(D-ribitylamino)uracil. Residue Arg-128 coordinates (2S)-2-hydroxy-3-oxobutyl phosphate.

It belongs to the DMRL synthase family. Forms an icosahedral capsid composed of 60 subunits, arranged as a dodecamer of pentamers.

The catalysed reaction is (2S)-2-hydroxy-3-oxobutyl phosphate + 5-amino-6-(D-ribitylamino)uracil = 6,7-dimethyl-8-(1-D-ribityl)lumazine + phosphate + 2 H2O + H(+). It functions in the pathway cofactor biosynthesis; riboflavin biosynthesis; riboflavin from 2-hydroxy-3-oxobutyl phosphate and 5-amino-6-(D-ribitylamino)uracil: step 1/2. In terms of biological role, catalyzes the formation of 6,7-dimethyl-8-ribityllumazine by condensation of 5-amino-6-(D-ribitylamino)uracil with 3,4-dihydroxy-2-butanone 4-phosphate. This is the penultimate step in the biosynthesis of riboflavin. The protein is 6,7-dimethyl-8-ribityllumazine synthase of Histophilus somni (strain 129Pt) (Haemophilus somnus).